The following is a 70-amino-acid chain: Beta-defensin 107 (70 aa).

The N-terminal stretch at 1–26 (MPGAMKIFVFILAALILLAQIFQART) is a signal peptide. 2 disulfide bridges follow: Cys-41–Cys-55 and Cys-45–Cys-64.

It belongs to the beta-defensin family. As to expression, specifically expressed in testis.

Its subcellular location is the secreted. In terms of biological role, has antibacterial activity. In Homo sapiens (Human), this protein is Beta-defensin 107 (DEFB107A).